A 53-amino-acid polypeptide reads, in one-letter code: UPF0391 membrane protein PC1_0455 (53 aa).

The next 2 membrane-spanning stretches (helical) occupy residues Trp4 to Ala24 and Ala30 to Phe47.

Belongs to the UPF0391 family.

It is found in the cell membrane. The chain is UPF0391 membrane protein PC1_0455 from Pectobacterium carotovorum subsp. carotovorum (strain PC1).